The sequence spans 712 residues: MLVCLHLQVFLASVALFEVAASDTIAQAASTTTISDAVSKVKTQVNKAFLDSRTRLKTALSSEAPTTRQLSEYFKHAKGRTRTAIRNGQVWEESLKRLRRDTTLTNVTDPSLDLTALSWEVGCGAPVPLVKCDENSPYRTITGDCNNRRSPALGAANRALARWLPAEYEDGLAVPFGWTQRKTRNGFRVPLAREVSNKIVGYLDEEGVLDQNRSLLFMQWGQIVDHDLDFAPETELGSSEHSKVQCEEYCIQGDNCFPIMFPKNDPKLKTQGKCMPFFRAGFVCPTPPYQSLARDQINAVTSFLDASLVYGSEPSLASRLRNLSSPLGLMAVNQEAWDHGLAYPPFNNVKPSPCEFINTTAHVPCFQAGDSRASEQILLATVHTLLLREHNRLARELKRLNPHWDGEMLYQEARKILGAFIQIITFRDYLPIVLGSEMQKWIPPYQGYNNSVDPRISNVFTFAFRFGHMEVPSTVSRLDENYQPWGPEAELPLHTLFFNTWRIIKDGGIDPLVRGLLAKKSKLMNQNKMVTSELRNKLFQPTHKIHGFDLAAINLQRCRDHGMPGYNSWRGFCGLSQPKTLKGLQAVLKNKILAKKLLDLYKTPDNIDIWIGGNAEPMVERGRVGPLLACLLGRQFQQIRDGDRFWWENPGVFTEKQRDSLQKVSFSRLICDNTHVTKVPLHAFQANNYPHDFVDCSAVDKLDLSPWASREN.

Positions 1–21 are cleaved as a signal peptide; sequence MLVCLHLQVFLASVALFEVAA. The propeptide occupies 22-117; that stretch reads SDTIAQAAST…TDPSLDLTAL (96 aa). An N-linked (GlcNAc...) (complex) asparagine; alternate glycan is attached at Asn-106. A glycan (N-linked (GlcNAc...) (hybrid) asparagine; alternate) is linked at Asn-106. Intrachain disulfides connect Cys-123/Cys-284, Cys-132/Cys-145, Cys-246/Cys-256, and Cys-250/Cys-274. An N-linked (GlcNAc...) (complex) asparagine; alternate glycan is attached at Asn-212. An N-linked (GlcNAc...) (hybrid) asparagine; alternate glycan is attached at Asn-212. Position 225 (Asp-225) interacts with heme b. His-226 (proton acceptor) is an active-site residue. Asp-227 lines the Ca(2+) pocket. Residues Thr-301, Phe-303, Asp-305, and Ser-307 each coordinate Ca(2+). A Phosphoserine modification is found at Ser-315. N-linked (GlcNAc...) (high mannose) asparagine glycosylation is present at Asn-322. A disulfide bridge links Cys-354 with Cys-365. An N-linked (GlcNAc...) asparagine glycan is attached at Asn-358. Glu-375 contacts heme b. Asn-449 is a glycosylation site (N-linked (GlcNAc...) (complex) asparagine; alternate). N-linked (GlcNAc...) (hybrid) asparagine; alternate glycosylation is present at Asn-449. Asn-449 is a glycosylation site (N-linked (GlcNAc...) (high mannose) asparagine; alternate). Position 468 (His-468) interacts with heme b. The residue at position 482 (Tyr-482) is a 3'-nitrotyrosine. 2 cysteine pairs are disulfide-bonded: Cys-573–Cys-630 and Cys-671–Cys-696.

Belongs to the peroxidase family. XPO subfamily. Requires Ca(2+) as cofactor. Heme b is required as a cofactor. As to expression, mammary gland; milk.

The protein resides in the secreted. Its subcellular location is the cytoplasm. The enzyme catalyses 2 a phenolic donor + H2O2 = 2 a phenolic radical donor + 2 H2O. It catalyses the reaction thiocyanate + H2O2 + H(+) = hypothiocyanous acid + H2O. It carries out the reaction iodide + H2O2 = hypoiodite + H2O. Inhibited by small molecule methimazole (MMZ). Functionally, heme-containing oxidoreductase which catalyzes the conversion of thiocyanate (SCN(-)) into antimicrobial agent hypothiocyanous acid (OSCN(-)) in the presence of hydrogen peroxide (H2O2). Also involved in the conversion of iodide (I(-)) into hypoiodite (IO(-)) in the presence of H2O2. Responsible for the inactivation of a wide range of micro-organisms and hence, important component of defense mechanism. Shows antibacterial properties against several Gram-positive bacteria including some Staphylococcus species and Gram-negative bacteria including E.coli, P.aeruginosa and some Salmonella species. Inhibits the growth of several fungi including A.niger, Trichoderma species, C.cassicola, P.meadii and C.salmonicolor. Does not have anti-fungal activity towards C.albicans and Pythium species. May protect the udder from infection and may promote growth in newborns. May be implicated in airway host defense against infection. May contribute to maintaining an appropriate H2O2 cellular level, therefore protecting cells from H2O2-caused injuries and inflammation. This is Lactoperoxidase (LPO) from Capra hircus (Goat).